Reading from the N-terminus, the 150-residue chain is Large ribosomal subunit protein uL15 (150 aa).

Residues 1–58 (MNLSGIKPPKGQVKTKKRIGRGMGSGHGKTATRGSKGQHAGTGFSQKRGFEGGQMPLH) are disordered.

It belongs to the universal ribosomal protein uL15 family. Part of the 50S ribosomal subunit.

Binds to the 23S rRNA. This Solibacter usitatus (strain Ellin6076) protein is Large ribosomal subunit protein uL15.